The chain runs to 490 residues: (21S)-21-acetyl-1-hydroxy-apo-melianone synthase CYP88A164 (490 aa).

A helical transmembrane segment spans residues 4–24 (DLLWLILAIVVGTYVVLFGFL). Cys438 is a heme binding site.

The protein belongs to the cytochrome P450 family. Requires heme as cofactor. In terms of tissue distribution, mainly expressed in petioles and, to a lower extent, in roots.

The protein localises to the membrane. The enzyme catalyses (21S)-21-acetoxyl-apo-melianone + reduced [NADPH--hemoprotein reductase] + O2 = (21S)-21-acetyl-1-hydroxy-apo-melianone + oxidized [NADPH--hemoprotein reductase] + H2O + H(+). Its pathway is secondary metabolite biosynthesis; terpenoid biosynthesis. Monooxygenase involved in the biosynthesis of limonoids triterpene natural products such as azadirachtin, an antifeedant widely used as bioinsecticide, and possessing many medicinal applications including anti-tumoral, anti-malarial, anti-rheumatic, antibacterial, anti-inflammatory, anti-pyretic and diuretic effects. Catalyzes the conversion of (21S)-21-acetoxyl-apo-melianone to (21S)-21-acetyl-1-hydroxy-apo-melianone. In Melia azedarach (Chinaberry tree), this protein is (21S)-21-acetyl-1-hydroxy-apo-melianone synthase CYP88A164.